A 213-amino-acid chain; its full sequence is Adenylate kinase (213 aa).

Position 10 to 15 (10 to 15 (GAGKGT)) interacts with ATP. The interval 30 to 59 (STGDMFRAAMANQTEMGVLAKSYIDKGDLV) is NMP. Residues threonine 31, arginine 36, 57 to 59 (DLV), 86 to 89 (GYPR), and glutamine 93 each bind AMP. Residues 127–160 (GRIINKKTGETFHKIFNPPVGDYKEEDFYQREDD) are LID. ATP is bound by residues arginine 128 and 137–138 (TF). The AMP site is built by arginine 157 and arginine 168. Lysine 196 is a binding site for ATP.

It belongs to the adenylate kinase family. As to quaternary structure, monomer.

Its subcellular location is the cytoplasm. It catalyses the reaction AMP + ATP = 2 ADP. Its pathway is purine metabolism; AMP biosynthesis via salvage pathway; AMP from ADP: step 1/1. Its function is as follows. Catalyzes the reversible transfer of the terminal phosphate group between ATP and AMP. Plays an important role in cellular energy homeostasis and in adenine nucleotide metabolism. The chain is Adenylate kinase from Streptococcus equi subsp. equi (strain 4047).